The primary structure comprises 286 residues: Thiamine-monophosphate kinase (286 aa).

Mg(2+)-binding residues include Asp-22, Ser-36, Thr-37, and Asp-38. Asp-45 lines the substrate pocket. Asp-66 and Asp-111 together coordinate Mg(2+). ATP is bound by residues 110–111 and Arg-136; that span reads GD. Asp-191 serves as a coordination point for Mg(2+). Position 193 (Ser-193) interacts with ATP. Residue Asp-194 participates in Mg(2+) binding. Residue Tyr-282 coordinates substrate.

The protein belongs to the thiamine-monophosphate kinase family.

The enzyme catalyses thiamine phosphate + ATP = thiamine diphosphate + ADP. The protein operates within cofactor biosynthesis; thiamine diphosphate biosynthesis; thiamine diphosphate from thiamine phosphate: step 1/1. Functionally, catalyzes the ATP-dependent phosphorylation of thiamine-monophosphate (TMP) to form thiamine-pyrophosphate (TPP), the active form of vitamin B1. The chain is Thiamine-monophosphate kinase from Methanospirillum hungatei JF-1 (strain ATCC 27890 / DSM 864 / NBRC 100397 / JF-1).